Here is a 213-residue protein sequence, read N- to C-terminus: MILRIPSLLYLFTLLTAVYAVKFDLTSDRNPKPSIIWNFASAHSLVIVTANVPGEPDQQVDIQILDGSERGNVYLSKKDVRGEARLAVTTHESADVGVCLTNRYTGSGNPRVVRSVELDVDIGADAIDYNAIANQESLSILEVEMRKLEAVTKEIVEEMGYLQRREMRMRDTNESTNQRVKVFSVLIICCTIGLGVWQLLHLRSFFKRKYLID.

The N-terminal stretch at 1-20 (MILRIPSLLYLFTLLTAVYA) is a signal peptide. Residues 21–181 (VKFDLTSDRN…TNESTNQRVK (161 aa)) are Lumenal-facing. Residues 33 to 122 (PSIIWNFASA…VRSVELDVDI (90 aa)) enclose the GOLD domain. The helical transmembrane segment at 182–202 (VFSVLIICCTIGLGVWQLLHL) threads the bilayer. The Cytoplasmic portion of the chain corresponds to 203 to 213 (RSFFKRKYLID).

The protein belongs to the EMP24/GP25L family.

The protein localises to the endoplasmic reticulum membrane. Its subcellular location is the golgi apparatus membrane. Constituent of COPII-coated endoplasmic reticulum-derived transport vesicles. Required for efficient transport of a subset of secretory proteins to the Golgi. Facilitates retrograde transport from the Golgi to the endoplasmic reticulum. The polypeptide is Endoplasmic reticulum vesicle protein 25 (ERV25) (Cryptococcus neoformans var. neoformans serotype D (strain B-3501A) (Filobasidiella neoformans)).